An 82-amino-acid chain; its full sequence is uncharacterized protein (82 aa).

Residues 60 to 82 (YKRRRPDHMMKRNSPSYTGDHKT) are disordered.

This is an uncharacterized protein from Saccharomyces cerevisiae (strain ATCC 204508 / S288c) (Baker's yeast).